The primary structure comprises 305 residues: UDP-3-O-acyl-N-acetylglucosamine deacetylase (305 aa).

3 residues coordinate Zn(2+): H79, H238, and D242. H265 (proton donor) is an active-site residue.

It belongs to the LpxC family. It depends on Zn(2+) as a cofactor.

The enzyme catalyses a UDP-3-O-[(3R)-3-hydroxyacyl]-N-acetyl-alpha-D-glucosamine + H2O = a UDP-3-O-[(3R)-3-hydroxyacyl]-alpha-D-glucosamine + acetate. It participates in glycolipid biosynthesis; lipid IV(A) biosynthesis; lipid IV(A) from (3R)-3-hydroxytetradecanoyl-[acyl-carrier-protein] and UDP-N-acetyl-alpha-D-glucosamine: step 2/6. Functionally, catalyzes the hydrolysis of UDP-3-O-myristoyl-N-acetylglucosamine to form UDP-3-O-myristoylglucosamine and acetate, the committed step in lipid A biosynthesis. This Mannheimia succiniciproducens (strain KCTC 0769BP / MBEL55E) protein is UDP-3-O-acyl-N-acetylglucosamine deacetylase.